Here is a 61-residue protein sequence, read N- to C-terminus: Temporin-MT3 (61 aa).

A signal peptide spans 1 to 22; it reads MFTLKKPLLLLFFLGTINLSLC. The propeptide at 23 to 44 is removed in mature form; that stretch reads EQERNAEEERRDEPDERNAEVE. Position 59 is a leucine amide (leucine 59).

It belongs to the frog skin active peptide (FSAP) family. Temporin subfamily. Expressed by the skin glands.

The protein resides in the secreted. In terms of biological role, antimicrobial peptide. The chain is Temporin-MT3 from Amolops mantzorum (Sichuan torrent frog).